A 438-amino-acid chain; its full sequence is Coenzyme A disulfide reductase (438 aa).

FAD is bound at residue 8 to 33 (GAVAGGATCASQIRRLDKESDIIIFE). The substrate site is built by Thr-15, Gln-19, Arg-22, Ser-39, and Asn-42. Residue Cys-43 is the Nucleophile of the active site. The active-site Redox-active is the Cys-43. Lys-71 contacts substrate. 151-166 (VLVVGAGYVSLEVLEN) is a binding site for NADP(+). 267–277 (TNVPNIYAIGD) serves as a coordination point for FAD. His-299 is a binding site for substrate. Residue Tyr-419 participates in FAD binding. Lys-427 contributes to the substrate binding site.

Belongs to the class-III pyridine nucleotide-disulfide oxidoreductase family. In terms of assembly, homodimer. The cofactor is FAD.

The catalysed reaction is NADP(+) + 2 CoA = CoA-disulfide + NADPH + H(+). Catalyzes specifically the NADPH-dependent reduction of coenzyme A disulfide. This chain is Coenzyme A disulfide reductase, found in Staphylococcus aureus (strain COL).